We begin with the raw amino-acid sequence, 1005 residues long: Non-structural polyprotein 1A (1005 aa).

4 helical membrane passes run 239–259 (PDGA…MDYM), 286–306 (DEIV…SLAY), 313–333 (VLIL…ALVA), and 344–364 (TLVL…YGLG). Active-site charge relay system; for serine protease activity residues include histidine 524, aspartate 556, and serine 621. Tyrosine 753 carries the O-(5'-phospho-RNA)-tyrosine modification. Residues 940 to 984 (PVIQQVEQQPQVEQQQQPQQPVVEEKKRTPPPKPQRKPKTGAKAK) form a disordered region. Residues 941–961 (VIQQVEQQPQVEQQQQPQQPV) are compositionally biased toward low complexity.

The protein belongs to the astroviridae polyprotein 1A family. In terms of assembly, monomer. Post-translationally, cleaved by the viral and host proteases. The protease is probably autocatalytically cleaved.

The protein localises to the host membrane. The catalysed reaction is RNA(n) + a ribonucleoside 5'-triphosphate = RNA(n+1) + diphosphate. In terms of biological role, responsible for the cleavage of the polyprotein into functional products. Its function is as follows. Protein covalently attached to the 5' extremity of the genomic and subgenomic RNAs. It may serve as a primer for the replicase. This is Non-structural polyprotein 1A (ORF1) from Avian nephritis virus 1 (ANV-1).